The chain runs to 236 residues: Ubiquinone biosynthesis O-methyltransferase (236 aa).

S-adenosyl-L-methionine is bound by residues arginine 39, glycine 59, aspartate 80, and methionine 124.

This sequence belongs to the methyltransferase superfamily. UbiG/COQ3 family.

The enzyme catalyses a 3-demethylubiquinol + S-adenosyl-L-methionine = a ubiquinol + S-adenosyl-L-homocysteine + H(+). It carries out the reaction a 3-(all-trans-polyprenyl)benzene-1,2-diol + S-adenosyl-L-methionine = a 2-methoxy-6-(all-trans-polyprenyl)phenol + S-adenosyl-L-homocysteine + H(+). It participates in cofactor biosynthesis; ubiquinone biosynthesis. O-methyltransferase that catalyzes the 2 O-methylation steps in the ubiquinone biosynthetic pathway. In Shewanella sp. (strain ANA-3), this protein is Ubiquinone biosynthesis O-methyltransferase.